The primary structure comprises 468 residues: Ubiquitin carboxyl-terminal hydrolase 6 (468 aa).

Positions 1–71 (MMIPIAIRWQ…IKPNATLLMM (71 aa)) constitute a Ubiquitin-like domain. The 365-residue stretch at 101–465 (SGLINLGNTC…SAYILLYKAK (365 aa)) folds into the USP domain. The active-site Nucleophile is C110. Residue H415 is the Proton acceptor of the active site.

This sequence belongs to the peptidase C19 family. USP14/UBP6 subfamily. In terms of assembly, component of the 26S proteasome. Interacts with rpn1.

It localises to the nucleus. The enzyme catalyses Thiol-dependent hydrolysis of ester, thioester, amide, peptide and isopeptide bonds formed by the C-terminal Gly of ubiquitin (a 76-residue protein attached to proteins as an intracellular targeting signal).. Ubiquitin-protein hydrolase is involved both in the processing of ubiquitin precursors and of ubiquitinated proteins. This enzyme is a thiol protease that recognizes and hydrolyzes a peptide bond at the C-terminal glycine of ubiquitin. In Schizosaccharomyces pombe (strain 972 / ATCC 24843) (Fission yeast), this protein is Ubiquitin carboxyl-terminal hydrolase 6 (ubp6).